The primary structure comprises 262 residues: 3-methyl-2-oxobutanoate hydroxymethyltransferase (262 aa).

Residues Asp42 and Asp81 each contribute to the Mg(2+) site. 3-methyl-2-oxobutanoate contacts are provided by residues 42 to 43 (DS), Asp81, and Lys110. Glu112 is a Mg(2+) binding site. Catalysis depends on Glu180, which acts as the Proton acceptor.

This sequence belongs to the PanB family. Homodecamer; pentamer of dimers. Mg(2+) serves as cofactor.

Its subcellular location is the cytoplasm. It carries out the reaction 3-methyl-2-oxobutanoate + (6R)-5,10-methylene-5,6,7,8-tetrahydrofolate + H2O = 2-dehydropantoate + (6S)-5,6,7,8-tetrahydrofolate. Its pathway is cofactor biosynthesis; (R)-pantothenate biosynthesis; (R)-pantoate from 3-methyl-2-oxobutanoate: step 1/2. Catalyzes the reversible reaction in which hydroxymethyl group from 5,10-methylenetetrahydrofolate is transferred onto alpha-ketoisovalerate to form ketopantoate. This chain is 3-methyl-2-oxobutanoate hydroxymethyltransferase, found in Legionella pneumophila (strain Corby).